Reading from the N-terminus, the 363-residue chain is dTDP-3-amino-3,6-dideoxy-alpha-D-galactopyranose transaminase (363 aa).

At Lys185 the chain carries N6-(pyridoxal phosphate)lysine.

This sequence belongs to the DegT/DnrJ/EryC1 family. Pyridoxal 5'-phosphate is required as a cofactor.

It carries out the reaction dTDP-3-amino-3,6-dideoxy-alpha-D-galactopyranose + 2-oxoglutarate = dTDP-3-dehydro-6-deoxy-alpha-D-galactose + L-glutamate. Functionally, specifically aminates dTDP-6-deoxy-D-xylohex-3-ulose to form dTDP-D-Fucp3N in the biosynthesis of dTDP-3-acetamido-3,6-dideoxy-alpha-D-galactose, a glycan chain of the S-layer. This Aneurinibacillus thermoaerophilus protein is dTDP-3-amino-3,6-dideoxy-alpha-D-galactopyranose transaminase (fdtB).